We begin with the raw amino-acid sequence, 930 residues long: Serine/threonine-protein kinase PknD (930 aa).

One can recognise a Protein kinase domain in the interval Tyr-4 to Leu-291. ATP-binding positions include Ile-10–Val-18 and Lys-33. Catalysis depends on Asp-138, which acts as the Proton acceptor.

Belongs to the protein kinase superfamily. Ser/Thr protein kinase family. Autophosphorylated on serine and threonine residues.

It catalyses the reaction L-seryl-[protein] + ATP = O-phospho-L-seryl-[protein] + ADP + H(+). It carries out the reaction L-threonyl-[protein] + ATP = O-phospho-L-threonyl-[protein] + ADP + H(+). Its function is as follows. Together with the serine/threonine kinase Pkn1, may play a role in the specific interactions with host proteins during intracellular growth. This is Serine/threonine-protein kinase PknD from Chlamydia caviae (strain ATCC VR-813 / DSM 19441 / 03DC25 / GPIC) (Chlamydophila caviae).